Reading from the N-terminus, the 246-residue chain is V-type proton ATPase subunit D 1 (246 aa).

This sequence belongs to the V-ATPase D subunit family. V-ATPase is a heteromultimeric enzyme made up of two complexes: the ATP-hydrolytic V1 complex and the proton translocation V0 complex. The V1 complex consists of three catalytic AB heterodimers that form a heterohexamer, three peripheral stalks each consisting of EG heterodimers, one central rotor including subunits D and F, and the regulatory subunits C and H. The proton translocation complex V0 consists of the proton transport subunit a, a ring of proteolipid subunits c9c'', rotary subunit d, subunits e and f, and the accessory subunits VhaAC45 and ATP6AP2.

In terms of biological role, subunit of the V1 complex of vacuolar(H+)-ATPase (V-ATPase), a multisubunit enzyme composed of a peripheral complex (V1) that hydrolyzes ATP and a membrane integral complex (V0) that translocates protons. V-ATPase is responsible for acidifying and maintaining the pH of intracellular compartments and in some cell types, is targeted to the plasma membrane, where it is responsible for acidifying the extracellular environment. The chain is V-type proton ATPase subunit D 1 (Vha36-1) from Drosophila melanogaster (Fruit fly).